A 342-amino-acid polypeptide reads, in one-letter code: Transmembrane protein 268 (342 aa).

2 helical membrane-spanning segments follow: residues 106–126 and 133–153; these read AFAV…SQMF and AGVL…VLVF. The interval 245-267 is disordered; that stretch reads VEGPEDLEDAPLLPSTPGPQERP.

In terms of assembly, interacts with ITGAM; this interaction inhibits ITGAM degradation via the endosome-lysosome pathway. Interacts with ITGB4; this interaction prevents ITGB4 degradation.

Its subcellular location is the cell membrane. Stabilizes cell surface expression of ITGAM and participates in the adhesion and migration of phagocytes during bacterial clearance. The chain is Transmembrane protein 268 from Mus musculus (Mouse).